We begin with the raw amino-acid sequence, 227 residues long: uncharacterized protein (227 aa).

Positions 1 to 21 (MELKKIAVGLTALLGMSVANA) are cleaved as a signal peptide.

This is an uncharacterized protein from Haemophilus influenzae (strain ATCC 51907 / DSM 11121 / KW20 / Rd).